The sequence spans 288 residues: Rhox homeobox family member 2B (288 aa).

The disordered stretch occupies residues 16–136 (SPAVDDEKEL…GLEPGNAQQP (121 aa)). Positions 39–48 (VKEEEEDAQP) are enriched in acidic residues. A compositionally biased stretch (basic and acidic residues) spans 68–80 (GEEKDGGGEEKDG). The segment at residues 134-193 (QQPNVHAFTPLQLQELECIFQREQFPSEFLRRRLARSMNVTELAVQIWFENRRAKWRRHQ) is a DNA-binding region (homeobox). Positions 186 to 195 (RAKWRRHQRA) match the Nuclear localization signal motif.

The protein belongs to the paired-like homeobox family. PEPP subfamily. As to expression, expressed in testis, mainly expressed in germ cells, but also detected in somatic cells such as Sertoli cells, Leydig cells and peritubular cells.

It localises to the nucleus. Its function is as follows. Transcription factor maybe involved in reproductive processes. Modulates expression of target genes encoding proteins involved in processes relevant to spermatogenesis. In Homo sapiens (Human), this protein is Rhox homeobox family member 2B.